Consider the following 189-residue polypeptide: MIDQFERLPGIGPRTAQRLALHLLRQPEEQIHSFADALLAARSQVGQCQTCFHLSAEPTCEICRNPERSIGMLCVVADSRDLLALERTREYAGRYHVLGGLISPMDGIGPEMLQISNLVKRVAADEINEVILALTPSVEGDTTSLYLARLLKPFTEVSRIAYGLPVGSELEYADDVTLSRALEGRRAVE.

Residues 48-63 form a C4-type zinc finger; that stretch reads CQTCFHLSAEPTCEIC. The region spanning 71–165 is the Toprim domain; the sequence is GMLCVVADSR…EVSRIAYGLP (95 aa).

It belongs to the RecR family.

May play a role in DNA repair. It seems to be involved in an RecBC-independent recombinational process of DNA repair. It may act with RecF and RecO. The sequence is that of Recombination protein RecR from Synechococcus sp. (strain CC9311).